The following is a 191-amino-acid chain: UPF0312 protein Shewana3_1179 (191 aa).

An N-terminal signal peptide occupies residues 1-22; it reads MKKQLLAALIGGSLLAPMAASA.

Belongs to the UPF0312 family. Type 1 subfamily.

The protein localises to the periplasm. The protein is UPF0312 protein Shewana3_1179 of Shewanella sp. (strain ANA-3).